The sequence spans 81 residues: Photosystem I iron-sulfur center (81 aa).

2 4Fe-4S ferredoxin-type domains span residues 2–31 and 39–68; these read SHTVKIYDTCIGCTQCVRACPTDVLEMVPW and IASSPRTEDCVGCKRCETACPTDFLSIRVY. [4Fe-4S] cluster is bound by residues cysteine 11, cysteine 14, cysteine 17, cysteine 21, cysteine 48, cysteine 51, cysteine 54, and cysteine 58.

As to quaternary structure, the cyanobacterial PSI reaction center is composed of one copy each of PsaA,B,C,D,E,F,I,J,K,L,M and X, and forms trimeric complexes. Requires [4Fe-4S] cluster as cofactor.

The protein localises to the cellular thylakoid membrane. The catalysed reaction is reduced [plastocyanin] + hnu + oxidized [2Fe-2S]-[ferredoxin] = oxidized [plastocyanin] + reduced [2Fe-2S]-[ferredoxin]. In terms of biological role, apoprotein for the two 4Fe-4S centers FA and FB of photosystem I (PSI); essential for photochemical activity. FB is the terminal electron acceptor of PSI, donating electrons to ferredoxin. The C-terminus interacts with PsaA/B/D and helps assemble the protein into the PSI complex. Required for binding of PsaD and PsaE to PSI. PSI is a plastocyanin/cytochrome c6-ferredoxin oxidoreductase, converting photonic excitation into a charge separation, which transfers an electron from the donor P700 chlorophyll pair to the spectroscopically characterized acceptors A0, A1, FX, FA and FB in turn. In Microchaete diplosiphon (Fremyella diplosiphon), this protein is Photosystem I iron-sulfur center.